The primary structure comprises 747 residues: Flowering time control protein FCA (747 aa).

The tract at residues 80-101 (YSVRPTTPPVQQPLSGQKRGYP) is disordered. RRM domains lie at 120-201 (VKLF…YADG) and 211-291 (FKLF…FAEP). A compositionally biased stretch (basic and acidic residues) spans 291–301 (PKRPKPGESRE). The tract at residues 291–503 (PKRPKPGESR…QQPLQKMQHP (213 aa)) is disordered. 2 stretches are compositionally biased toward polar residues: residues 320 to 353 (RPTS…SNTG) and 395 to 406 (SSSATLQQQNRA). Residues 448–460 (SSQLPTSQLPPQQ) are compositionally biased toward low complexity. The span at 461-498 (NISRATAPQTPLNINLRPTTVSSATVQFPPRSQQQPLQ) shows a compositional bias: polar residues. The WW domain maps to 591–624 (GSVKCTWTEHTSPDGFKYYYNGLTGESKWEKPEE). A compositionally biased stretch (basic and acidic residues) spans 630 to 641 (REQQKQQQHQEK). Disordered regions lie at residues 630–707 (REQQ…SGIG) and 722–747 (AASM…KNKA). Over residues 642–673 (PTIQQSQTQLQPLQQQPQQVQQQYQGQQLQQP) the composition is skewed to low complexity. Composition is skewed to polar residues over residues 674–707 (FYSS…SGIG) and 726–739 (NDIS…QSPQ).

In terms of assembly, interacts (via C-terminus) with SWI3B and (via WW domain) with FY (via PPLPP motifs). Constitutively expressed, but the negative feedback maintains the active isoform a low level throughout much of the plant, except in meristematic cells at a specific time in development.

Its subcellular location is the nucleus. Plays a major role in the promotion of the transition of the vegetative meristem to reproductive development. Plays a role in the regulation of flowering time in the autonomous flowering pathway by decreasing FLOWERING LOCUS C mRNA levels. Required for RNA-mediated chromatin silencing of a range of loci in the genome. Cotranscriptionally recognizes aberrant RNA and marks it for silencing. Controls alternative cleavage and polyadenylation on pre-mRNAs and antisense RNAs. Acts redundantly with FPA to prevent the expression of distally polyadenylated antisense RNAs at the FLC locus. In Arabidopsis thaliana (Mouse-ear cress), this protein is Flowering time control protein FCA (FCA).